Reading from the N-terminus, the 89-residue chain is Acylphosphatase (89 aa).

The Acylphosphatase-like domain maps to 3–89 (ALEIYVSGNV…ENYESFEVAY (87 aa)). Residues Arg-18 and Asn-36 contribute to the active site.

The protein belongs to the acylphosphatase family.

The enzyme catalyses an acyl phosphate + H2O = a carboxylate + phosphate + H(+). This chain is Acylphosphatase (acyP), found in Archaeoglobus fulgidus (strain ATCC 49558 / DSM 4304 / JCM 9628 / NBRC 100126 / VC-16).